A 933-amino-acid chain; its full sequence is Exosome complex exonuclease RRP44 homolog A (933 aa).

Residues 50–163 (KIIVVDTNVV…LVTNDRENKR (114 aa)) enclose the PINc domain. The CSD1 domain occupies 217-321 (QEHKPMSEIT…NVDDAPRTSN (105 aa)). The interval 296–336 (AEEDDEEDDTVHLAPDNVDDAPRTSNLSHETSGDKNAAPVR) is disordered. Residues 371–438 (ALFVSKDRRI…ETEVVLIEND (68 aa)) enclose the CSD2 domain. Residues 469-798 (RQDLRHLLVF…FVHRLLAASL (330 aa)) enclose the RNB domain. The Mg(2+) site is built by Asp481 and Asp490.

This sequence belongs to the RNR ribonuclease family. As to quaternary structure, probable component of the RNA exosome complex. The cofactor is Mg(2+).

Its subcellular location is the nucleus. In terms of biological role, catalytic component of the RNA exosome complex which has 3'-&gt;5' exoribonuclease activity and participates in a multitude of cellular RNA processing and degradation events. Required for 5.8S rRNA intermediate processing and the degradation of 5' external transcribed spacer (5' ETS), a maturation by-product of rRNA synthesis. Is not involved in the degradation of turnip crinkle virus (TCV) RNA and significant virus resistance. Required for normal development of female gametophytes and early embryogenesis. This chain is Exosome complex exonuclease RRP44 homolog A, found in Arabidopsis thaliana (Mouse-ear cress).